Reading from the N-terminus, the 717-residue chain is Fatty acid oxidation complex subunit alpha (717 aa).

The segment at 1–190 (MIHAGNAITV…KDGAVDAVVS (190 aa)) is enoyl-CoA hydratase/isomerase. Asp298 serves as a coordination point for substrate. Positions 313-717 (HPVNQAAVLG…MAENNKKFYG (405 aa)) are 3-hydroxyacyl-CoA dehydrogenase. NAD(+) is bound by residues Met326, Asp345, 402–404 (VTE), Lys409, and Ser431. The For 3-hydroxyacyl-CoA dehydrogenase activity role is filled by His452. Asn455 is a binding site for NAD(+). Asn502 lines the substrate pocket.

The protein in the N-terminal section; belongs to the enoyl-CoA hydratase/isomerase family. It in the C-terminal section; belongs to the 3-hydroxyacyl-CoA dehydrogenase family. Heterotetramer of two alpha chains (FadB) and two beta chains (FadA).

The enzyme catalyses a (3S)-3-hydroxyacyl-CoA + NAD(+) = a 3-oxoacyl-CoA + NADH + H(+). The catalysed reaction is a (3S)-3-hydroxyacyl-CoA = a (2E)-enoyl-CoA + H2O. It catalyses the reaction a 4-saturated-(3S)-3-hydroxyacyl-CoA = a (3E)-enoyl-CoA + H2O. It carries out the reaction (3S)-3-hydroxybutanoyl-CoA = (3R)-3-hydroxybutanoyl-CoA. The enzyme catalyses a (3Z)-enoyl-CoA = a 4-saturated (2E)-enoyl-CoA. The catalysed reaction is a (3E)-enoyl-CoA = a 4-saturated (2E)-enoyl-CoA. It participates in lipid metabolism; fatty acid beta-oxidation. In terms of biological role, involved in the aerobic and anaerobic degradation of long-chain fatty acids via beta-oxidation cycle. Catalyzes the formation of 3-oxoacyl-CoA from enoyl-CoA via L-3-hydroxyacyl-CoA. It can also use D-3-hydroxyacyl-CoA and cis-3-enoyl-CoA as substrate. The sequence is that of Fatty acid oxidation complex subunit alpha from Acinetobacter baylyi (strain ATCC 33305 / BD413 / ADP1).